The chain runs to 453 residues: Aldehyde dehydrogenase, dimeric NADP-preferring (453 aa).

Residue S2 is modified to N-acetylserine. Residue K178 is modified to N6-acetyllysine. Residue 188-193 (GNTAVG) coordinates NAD(+). N6-acetyllysine is present on K194. Active-site residues include E210 and C244.

The protein belongs to the aldehyde dehydrogenase family. Homodimer.

It is found in the cytoplasm. The catalysed reaction is an aldehyde + NAD(+) + H2O = a carboxylate + NADH + 2 H(+). The enzyme catalyses octanal + NAD(+) + H2O = octanoate + NADH + 2 H(+). Its function is as follows. ALDHs play a major role in the detoxification of alcohol-derived acetaldehyde. They are involved in the metabolism of corticosteroids, biogenic amines, neurotransmitters, and lipid peroxidation. Oxidizes medium and long chain aldehydes into non-toxic fatty acids. Preferentially oxidizes aromatic aldehyde substrates. Comprises about 50 percent of corneal epithelial soluble proteins. May play a role in preventing corneal damage caused by ultraviolet light. This is Aldehyde dehydrogenase, dimeric NADP-preferring (ALDH3A1) from Canis lupus familiaris (Dog).